The following is a 997-amino-acid chain: FIP1[III]-like protein (997 aa).

Disordered regions lie at residues 250–272, 289–475, 534–553, and 880–900; these read ITSN…LNSV, AGSF…ETEG, SRSS…KEED, and QGKV…TIEQ. The span at 261–272 shows a compositional bias: polar residues; sequence SHSYGSKDLNSV. Basic and acidic residues-rich tracts occupy residues 309 to 323, 334 to 346, 367 to 379, and 388 to 404; these read TPSD…KEES, SVER…DRIR, ESLK…DQRE, and RLAE…EDSG. The Nuclear localization signal motif lies at 397-404; the sequence is IKRGEDSG. Residues 534 to 547 are compositionally biased toward polar residues; sequence SRSSFDLNQRNSRS. A coiled-coil region spans residues 930–963; it reads EIIEEVKGVEIDNERIQESLKKMEKRRERFKGTK.

This sequence belongs to the FIP1 family. Component of the cleavage and polyadenylation specificity factor (CPSF) complex. Forms a complex with cleavage and polyadenylation specificity factor (CPSF) subunits CLPS5, FIPS5, PAPS4, PCFS1, CSTF64 and CPSF30.

It localises to the nucleus. In terms of biological role, component of the cleavage and polyadenylation specificity factor (CPSF) complex that plays a key role in pre-mRNA 3'-end formation, recognizing the AAUAAA signal sequence and interacting with poly(A) polymerase and other factors to bring about cleavage and poly(A) addition. FIP1L1 contributes to poly(A) site recognition and stimulates poly(A) addition. Binds to U-rich RNA sequence elements surrounding the poly(A) site. May act to tether poly(A) polymerase to the CPSF complex. This Arabidopsis thaliana (Mouse-ear cress) protein is FIP1[III]-like protein.